A 1043-amino-acid chain; its full sequence is MHTEGEGSKESLASREERILNFWKTQEIFQKSLKNREGRTLYSFYDGPPFATGLPHYGHLLAGTIKDVVGRFATMDGYYVPRRFGWDCHGVPVEYEVEKSLNLTTPGAIEDFGVAKFNEECRKIVFRYVDEWEHYIYRVGRWVDFSATWKTMDASFMESVWWVFRSLYDQGLVYEGVKVVPFSTKLGTPLSNFEAGQNYKEVDDPSVVIKFALHGDPGSLLVWTTTPWTLVSNMAVAVGPEITYVRVADKVSGEQWILGQGCLSRWFSDPDTYEVIESFPGTALIGKSYEPPFNFFEQKRAEGAYTILPGSFVEESEGTGVVHMAPAFGEADFFVCKEHHVPMVCPVDNHGCFTEEIPEYQGQYIKSCDKGIIKSLKNQGKVFYHGTVVHRYPFCWRTDTPLIYKTVNSWFISVEKIKDKMLQANKKIHWVPEHIKEGRFGKWLEGARDWAISRNRYWGTPIPVWKSKDGDILVIGSVEELEKLTGEKVSDLHCHFVDQLKIEKDGKSFHRVPYVFDCWFDSGAMPYAQNHYPFENQKETESGFPADFIAEGLDQTRGWFYTLTVISAALFDQPVFKNAIVNGIVLAEDGNKMSKRLNNYPSPMSIMNTYGADALRLYLLDSVVVKAEDLRFSDKGVESVLKQVLLPLTNVLSFFKTYTDLYGFDANNYDKEEISYSEIDRWILSNLYTVVGKVRESMSSYNLNTAVNPFVTFIDDLTNWYIRRCRRRFWESADTPDRRAAFATLYEVLTVFCRVIAPFIPFISEDIYQQIKTENSLESVHLCDFPYIDLAKVFPDLEQRMGDAREIVGLGHSLRKEHKLKVRQPLANFYVVGPKDRLDQLDSFKQLISEELNVKNIVFYKEAPSFVKTTVKPNFRSLGRRVGEKIKDIQKALASLSQAQIQQLLTQEYLSLNLGSEEIVLHMEDVLISWETDPGYVARSSSLFTVVLDCQLTEELVVEAISRELVNKINTMRRNQKLHVSDRIVLRMQTSEEVRKAFLHYADYICEETLTTQSEFADVLEGEEWDINGHPTVIAIEVAARPH.

Positions 49-59 match the 'HIGH' region motif; the sequence is PFATGLPHYGH. Residues 592-596 carry the 'KMSKS' region motif; that stretch reads KMSKR. Lys-595 is a binding site for ATP.

The protein belongs to the class-I aminoacyl-tRNA synthetase family. IleS type 2 subfamily. As to quaternary structure, monomer. Requires Zn(2+) as cofactor.

It is found in the cytoplasm. The enzyme catalyses tRNA(Ile) + L-isoleucine + ATP = L-isoleucyl-tRNA(Ile) + AMP + diphosphate. Its function is as follows. Catalyzes the attachment of isoleucine to tRNA(Ile). As IleRS can inadvertently accommodate and process structurally similar amino acids such as valine, to avoid such errors it has two additional distinct tRNA(Ile)-dependent editing activities. One activity is designated as 'pretransfer' editing and involves the hydrolysis of activated Val-AMP. The other activity is designated 'posttransfer' editing and involves deacylation of mischarged Val-tRNA(Ile). This is Isoleucine--tRNA ligase from Chlamydia abortus (strain DSM 27085 / S26/3) (Chlamydophila abortus).